We begin with the raw amino-acid sequence, 649 residues long: Acetyl-coenzyme A synthetase (649 aa).

Residues 191-194 (RGGR), Thr311, and Asn335 contribute to the CoA site. ATP-binding positions include 387–389 (GEP), 411–416 (DTWWQT), Asp500, and Arg515. A CoA-binding site is contributed by Ser523. Position 526 (Arg526) interacts with ATP. 3 residues coordinate Mg(2+): Val537, Phe539, and Ile542. Arg584 lines the CoA pocket. N6-acetyllysine is present on Lys609.

This sequence belongs to the ATP-dependent AMP-binding enzyme family. Mg(2+) serves as cofactor. In terms of processing, acetylated. Deacetylation by the SIR2-homolog deacetylase activates the enzyme.

It catalyses the reaction acetate + ATP + CoA = acetyl-CoA + AMP + diphosphate. Functionally, catalyzes the conversion of acetate into acetyl-CoA (AcCoA), an essential intermediate at the junction of anabolic and catabolic pathways. AcsA undergoes a two-step reaction. In the first half reaction, AcsA combines acetate with ATP to form acetyl-adenylate (AcAMP) intermediate. In the second half reaction, it can then transfer the acetyl group from AcAMP to the sulfhydryl group of CoA, forming the product AcCoA. The polypeptide is Acetyl-coenzyme A synthetase (Vibrio cholerae serotype O1 (strain ATCC 39315 / El Tor Inaba N16961)).